The following is a 160-amino-acid chain: Ribonuclease P protein component 2 (160 aa).

This sequence belongs to the eukaryotic/archaeal RNase P protein component 2 family. In terms of assembly, consists of a catalytic RNA component and at least 4-5 protein subunits.

It is found in the cytoplasm. It carries out the reaction Endonucleolytic cleavage of RNA, removing 5'-extranucleotides from tRNA precursor.. Part of ribonuclease P, a protein complex that generates mature tRNA molecules by cleaving their 5'-ends. This is Ribonuclease P protein component 2 from Methanoculleus marisnigri (strain ATCC 35101 / DSM 1498 / JR1).